The primary structure comprises 159 residues: Nucleotide-binding protein Pmen_0939 (159 aa).

This sequence belongs to the YajQ family.

Functionally, nucleotide-binding protein. In Ectopseudomonas mendocina (strain ymp) (Pseudomonas mendocina), this protein is Nucleotide-binding protein Pmen_0939.